The following is an 86-amino-acid chain: MKNLIAELLLKLAQKEEESKELVAQVEALEIIVTAMLRNMAQSEQQMLIRQVEGALEGVKPDASVPDHDTELLRQYVKKLLRHPRH.

The stretch at 1-47 forms a coiled coil; the sequence is MKNLIAELLLKLAQKEEESKELVAQVEALEIIVTAMLRNMAQSEQQM.

The protein belongs to the IraP family. In terms of assembly, interacts with RssB.

The protein localises to the cytoplasm. Functionally, inhibits RpoS proteolysis by regulating RssB activity, thereby increasing the stability of the sigma stress factor RpoS especially during phosphate and magnesium starvation, but also in stationary phase and during nitrogen starvation. Its effect on RpoS stability is due to its interaction with RssB, which probably blocks the interaction of RssB with RpoS, and the consequent delivery of the RssB-RpoS complex to the ClpXP protein degradation pathway. This chain is Anti-adapter protein IraP, found in Salmonella arizonae (strain ATCC BAA-731 / CDC346-86 / RSK2980).